Consider the following 112-residue polypeptide: Peptidyl-tRNA hydrolase (112 aa).

The segment at 64–99 is disordered; sequence EEAKRAGLPTGLISDAGRTQLEPGTPTALAIGPAPD.

This sequence belongs to the PTH2 family.

Its subcellular location is the cytoplasm. It catalyses the reaction an N-acyl-L-alpha-aminoacyl-tRNA + H2O = an N-acyl-L-amino acid + a tRNA + H(+). Its function is as follows. The natural substrate for this enzyme may be peptidyl-tRNAs which drop off the ribosome during protein synthesis. The polypeptide is Peptidyl-tRNA hydrolase (Halobacterium salinarum (strain ATCC 29341 / DSM 671 / R1)).